Consider the following 1598-residue polypeptide: Structural maintenance of chromosomes flexible hinge domain-containing protein GMI1 (1598 aa).

Positions 1191–1218 are disordered; it reads VTSAPTSEREESGYSTPHSKTTPPPESG. Coiled coils occupy residues 1258 to 1301 and 1565 to 1595; these read TEDL…ASLE and EEMMTEENRSLRRLVKKLKKANEKYQNFTAM.

As to expression, highly expressed in closed buds and open flowers. Expressed at low levels in roots, stems, cauline leaves and siliques. Expressed in the region of the shoot and floral meristems.

It is found in the nucleus. Its function is as follows. Contributes to DNA double-strand break (DSB) repair via somatic homologous recombination. Functions downstream of ATM. The sequence is that of Structural maintenance of chromosomes flexible hinge domain-containing protein GMI1 from Arabidopsis thaliana (Mouse-ear cress).